The following is a 212-amino-acid chain: Phosphatidylserine decarboxylase proenzyme (212 aa).

S182 acts as the Schiff-base intermediate with substrate; via pyruvic acid in catalysis. S182 is modified (pyruvic acid (Ser); by autocatalysis).

The protein belongs to the phosphatidylserine decarboxylase family. PSD-A subfamily. In terms of assembly, heterodimer of a large membrane-associated beta subunit and a small pyruvoyl-containing alpha subunit. Pyruvate is required as a cofactor. In terms of processing, is synthesized initially as an inactive proenzyme. Formation of the active enzyme involves a self-maturation process in which the active site pyruvoyl group is generated from an internal serine residue via an autocatalytic post-translational modification. Two non-identical subunits are generated from the proenzyme in this reaction, and the pyruvate is formed at the N-terminus of the alpha chain, which is derived from the carboxyl end of the proenzyme. The post-translation cleavage follows an unusual pathway, termed non-hydrolytic serinolysis, in which the side chain hydroxyl group of the serine supplies its oxygen atom to form the C-terminus of the beta chain, while the remainder of the serine residue undergoes an oxidative deamination to produce ammonia and the pyruvoyl prosthetic group on the alpha chain.

The protein localises to the cell membrane. It catalyses the reaction a 1,2-diacyl-sn-glycero-3-phospho-L-serine + H(+) = a 1,2-diacyl-sn-glycero-3-phosphoethanolamine + CO2. It participates in phospholipid metabolism; phosphatidylethanolamine biosynthesis; phosphatidylethanolamine from CDP-diacylglycerol: step 2/2. Catalyzes the formation of phosphatidylethanolamine (PtdEtn) from phosphatidylserine (PtdSer). This Chlorobium chlorochromatii (strain CaD3) protein is Phosphatidylserine decarboxylase proenzyme.